Reading from the N-terminus, the 142-residue chain is HTH-type transcriptional regulator MntR (142 aa).

An HTH dtxR-type domain is found at methionine 1 to threonine 63. Aspartate 8, glutamate 11, histidine 77, glutamate 99, glutamate 102, and histidine 103 together coordinate Mn(2+).

The protein belongs to the DtxR/MntR family. As to quaternary structure, homodimer.

It is found in the cytoplasm. With respect to regulation, DNA binding is strongly activated by Mn(2+). Central regulator of manganese homeostasis. In Bacillus cereus (strain G9842), this protein is HTH-type transcriptional regulator MntR.